Here is a 566-residue protein sequence, read N- to C-terminus: Proline--tRNA ligase (566 aa).

Belongs to the class-II aminoacyl-tRNA synthetase family. ProS type 1 subfamily. Homodimer.

The protein resides in the cytoplasm. The catalysed reaction is tRNA(Pro) + L-proline + ATP = L-prolyl-tRNA(Pro) + AMP + diphosphate. Functionally, catalyzes the attachment of proline to tRNA(Pro) in a two-step reaction: proline is first activated by ATP to form Pro-AMP and then transferred to the acceptor end of tRNA(Pro). As ProRS can inadvertently accommodate and process non-cognate amino acids such as alanine and cysteine, to avoid such errors it has two additional distinct editing activities against alanine. One activity is designated as 'pretransfer' editing and involves the tRNA(Pro)-independent hydrolysis of activated Ala-AMP. The other activity is designated 'posttransfer' editing and involves deacylation of mischarged Ala-tRNA(Pro). The misacylated Cys-tRNA(Pro) is not edited by ProRS. The sequence is that of Proline--tRNA ligase from Campylobacter concisus (strain 13826).